The primary structure comprises 370 residues: L-lactate oxidase (370 aa).

The FMN hydroxy acid dehydrogenase domain maps to 8–367 (DPDGMPVTLS…TPDLLTGFSG (360 aa)). Tyr34 serves as a coordination point for pyruvate. Residues 87-89 (PMA), Ser116, and Gln136 contribute to the FMN site. A pyruvate-binding site is contributed by Tyr138. Thr164 is an FMN binding site. Arg173 serves as a coordination point for pyruvate. Residues Lys238 and Ser260 each contribute to the FMN site. His262 and Arg265 together coordinate pyruvate. Catalysis depends on His262, which acts as the Proton acceptor. FMN is bound by residues 293 to 297 (DGGIR) and Arg317.

Belongs to the FMN-dependent alpha-hydroxy acid dehydrogenase family. As to quaternary structure, homotetramer. Requires FMN as cofactor.

It catalyses the reaction (S)-lactate + O2 = pyruvate + H2O2. It carries out the reaction a (2S)-2-hydroxycarboxylate + O2 = a 2-oxocarboxylate + H2O2. The catalysed reaction is glycolate + O2 = glyoxylate + H2O2. The enzyme catalyses 2-hydroxyoctadecanoate + O2 = 2-oxooctadecanoate + H2O2. Catalyzes the oxidation of (S)-lactate (L-lactate) to pyruvate, with a reduction of O2 to H2O2. Is also able to use glycolate and to a lesser extent 2-hydroxyoctadecanoate as substrate. This chain is L-lactate oxidase, found in Roseobacter sp. (strain GAI101).